The chain runs to 541 residues: 5' exonuclease Apollo (541 aa).

K334 participates in a covalent cross-link: Glycyl lysine isopeptide (Lys-Gly) (interchain with G-Cter in SUMO2). Residues 455–475 form a disordered region; the sequence is PLLSRGDSGSPARGNQSDCVG. The TBM motif lies at 492–507; it reads ESRGLALKYLLTPVHF.

This sequence belongs to the DNA repair metallo-beta-lactamase (DRMBL) family. In terms of assembly, interacts with MUS81, MRE11 and FANCD2. Interacts with HSPA2, HSPA8 and HSPA14. Interacts with SPAG5. Interacts with TERF2; the interaction is direct. Ubiquitinated, leading to its degradation. Interaction with TERF2 protects it from ubiquitination.

It localises to the chromosome. The protein resides in the telomere. The protein localises to the nucleus. Its subcellular location is the cytoplasm. It is found in the cytoskeleton. It localises to the microtubule organizing center. The protein resides in the centrosome. The enzyme catalyses a beta-lactam + H2O = a substituted beta-amino acid. 5'-3' exonuclease that plays a central role in telomere maintenance and protection during S-phase. Participates in the protection of telomeres against non-homologous end-joining (NHEJ)-mediated repair, thereby ensuring that telomeres do not fuse. Plays a key role in telomeric loop (T loop) formation by being recruited by TERF2 at the leading end telomeres and by processing leading-end telomeres immediately after their replication via its exonuclease activity: generates 3' single-stranded overhang at the leading end telomeres avoiding blunt leading-end telomeres that are vulnerable to end-joining reactions and expose the telomere end in a manner that activates the DNA repair pathways. Together with TERF2, required to protect telomeres from replicative damage during replication by controlling the amount of DNA topoisomerase (TOP1, TOP2A and TOP2B) needed for telomere replication during fork passage and prevent aberrant telomere topology. Also involved in response to DNA damage: plays a role in response to DNA interstrand cross-links (ICLs) by facilitating double-strand break formation. In case of spindle stress, involved in prophase checkpoint. Possesses beta-lactamase activity, catalyzing the hydrolysis of penicillin G and nitrocefin. Exhibits no activity towards other beta-lactam antibiotic classes including cephalosporins (cefotaxime) and carbapenems (imipenem). This is 5' exonuclease Apollo (Dclre1b) from Mus musculus (Mouse).